We begin with the raw amino-acid sequence, 511 residues long: MALSNTLSLSSSKSLVQSHLLHNPTPQPRFSLFPTTQHGRRHPISAVHAAEPSKTAVKQGKWSLDSWKTKKALQLPEYPDEKELESVLKTLEMNPPLVFAGEARSLEEKLGEAALGKAFLLQGGDCAESFKEFNANNIRDTFRILLQMSVVLMFGGQVPVIKVGRMAGQFAKPRSDPFEEINGVKLPSYKGDNINGDTFDEKSRIPDPHRLIRAYMQSAATLNLLRAFATGGYAAMQRVTEWNLDFVENSEQGDRYQELAHRVDEALGFMAAAGLTVDHPIMSTTDFWTSHECLLLPYEQALTREDSTSGLFYDCSAHMVWVGERTRQLDGAHVEFLRGVANPLGIKVSQKMDPKELIKLIDILNPANKPGRITVIVRMGAENMRVKLSHLVRAVRGAGQIVTWVCDPMHGNTIKAPCGLKTRAFDSIQAEVRAFFDVHEQEGSHPWCIHLEMTGQNVTECIGGSRTVTYDDLGSRYHTHCDPRLNASQSLELSFIVAERLRRRRMSSQRL.

A chloroplast-targeting transit peptide spans 1–49; the sequence is MALSNTLSLSSSKSLVQSHLLHNPTPQPRFSLFPTTQHGRRHPISAVHA.

This sequence belongs to the class-II DAHP synthase family. In terms of tissue distribution, higher levels seen in the cotyledons than in the leaves and flowers. Lower levels seen in the roots and stems.

It localises to the plastid. Its subcellular location is the chloroplast. The enzyme catalyses D-erythrose 4-phosphate + phosphoenolpyruvate + H2O = 7-phospho-2-dehydro-3-deoxy-D-arabino-heptonate + phosphate. It participates in metabolic intermediate biosynthesis; chorismate biosynthesis; chorismate from D-erythrose 4-phosphate and phosphoenolpyruvate: step 1/7. Functionally, may be involved in the synthesis of secondary metabolites derived from intermediates of the pre-chorismate pathway up to shikimate. The polypeptide is Phospho-2-dehydro-3-deoxyheptonate aldolase 1, chloroplastic (Solanum lycopersicum (Tomato)).